The sequence spans 935 residues: Potassium channel AKT1 (935 aa).

Over 1–106 the chain is Cytoplasmic; sequence MARWGAARMA…YDRRYRIWET (106 aa). A helical membrane pass occupies residues 107-127; sequence FLIVLVVYSAWVSPFEFGFIP. The Extracellular segment spans residues 128-136; that stretch reads KPTGALATA. Residues 137 to 157 form a helical membrane-spanning segment; sequence DNVVNAFFAVDIILTFFVAYL. At 158 to 178 the chain is on the cytoplasmic side; that stretch reads DKMSYMLEDDPKKIAWRYSTT. A helical transmembrane segment spans residues 179-199; it reads WLVLDVASTIPSEFARRILPS. Residues 200–205 lie on the Extracellular side of the membrane; sequence KLRSYG. The helical; Voltage-sensor transmembrane segment at 206-226 threads the bilayer; it reads FFNMLRLWRLRRVSSLFSRLE. At 227 to 240 the chain is on the cytoplasmic side; it reads KDRHFNYFWVRCAK. The chain crosses the membrane as a helical span at residues 241–261; that stretch reads LICVTLFAVHCAACFYYLLAD. Over 262 to 288 the chain is Extracellular; the sequence is RYPVPTSTWIGNYMADFHERSLWIRYV. Positions 289 to 308 form an intramembrane region, pore-forming; the sequence is TSVYWSITTLTTVGYGDLHA. At 309-312 the chain is on the extracellular side; the sequence is ENTR. A helical transmembrane segment spans residues 313–333; sequence EMIFNIFYMLFNLGLTAYLIG. Over 334–935 the chain is Cytoplasmic; it reads NMTNLVVHGT…WDAEKMKGKS (602 aa). 419-538 contacts a nucleoside 3',5'-cyclic phosphate; that stretch reads LFQGVSNDLI…TIIMNNLIQF (120 aa). 6 ANK repeats span residues 565 to 594, 598 to 627, 631 to 660, 662 to 691, 695 to 724, and 728 to 757; these read DLPI…DPNE, DGHT…DPNA, EGKV…DLSS, DTGL…DVNR, DGTT…DIDK, and NGWT…ATAS. Residues 826–854 are disordered; sequence SQAQRETDHPLSRGGLAATGSPNPSSGSR. Polar residues predominate over residues 845–854; that stretch reads GSPNPSSGSR. In terms of domain architecture, KHA spans 859-935; the sequence is RVTISCPEKG…WDAEKMKGKS (77 aa).

It belongs to the potassium channel family. Plant (TC 1.A.1.4) subfamily. In terms of assembly, the potassium channel is probably a homo- or heterotetrameric complex of pore-forming subunits. Highly expressed in the epidermis and endodermis of roots, and at lower level in cells of the vasculature and the cortex. Expressed in xylem parenchyma, phloem and mesophyll cells of leaves.

Its subcellular location is the membrane. Functionally, highly selective inward-rectifying potassium channel that mediates potassium uptake by plant roots. The sequence is that of Potassium channel AKT1 (AKT1) from Oryza sativa subsp. indica (Rice).